The primary structure comprises 686 residues: Translation initiation factor IF-2 (686 aa).

A disordered region spans residues 61-98; the sequence is FEVEEKVVRSKKNSNKKKKKGKGNEDKRQENFAGRQQT. Residues 69–81 are compositionally biased toward basic residues; sequence RSKKNSNKKKKKG. In terms of domain architecture, tr-type G spans 188 to 357; it reads ERPAVVTIMG…LLVSEVEEYK (170 aa). The segment at 197–204 is G1; sequence GHVDHGKT. Residue 197–204 participates in GTP binding; that stretch reads GHVDHGKT. A G2 region spans residues 222–226; that stretch reads GITQH. Residues 243–246 form a G3 region; sequence DTPG. GTP is bound by residues 243 to 247 and 297 to 300; these read DTPGH and NKMD. Residues 297–300 are G4; it reads NKMD. Positions 333–335 are G5; that stretch reads SAI.

The protein belongs to the TRAFAC class translation factor GTPase superfamily. Classic translation factor GTPase family. IF-2 subfamily.

The protein resides in the cytoplasm. In terms of biological role, one of the essential components for the initiation of protein synthesis. Protects formylmethionyl-tRNA from spontaneous hydrolysis and promotes its binding to the 30S ribosomal subunits. Also involved in the hydrolysis of GTP during the formation of the 70S ribosomal complex. The chain is Translation initiation factor IF-2 from Bacillus cereus (strain B4264).